Consider the following 399-residue polypeptide: Acetylornithine aminotransferase (399 aa).

Pyridoxal 5'-phosphate-binding positions include 97–98 (GA) and Phe130. Arg133 provides a ligand contact to N(2)-acetyl-L-ornithine. 215 to 218 (DEVQ) contributes to the pyridoxal 5'-phosphate binding site. An N6-(pyridoxal phosphate)lysine modification is found at Lys244. Position 272 (Thr272) interacts with N(2)-acetyl-L-ornithine. Residue Thr273 participates in pyridoxal 5'-phosphate binding.

This sequence belongs to the class-III pyridoxal-phosphate-dependent aminotransferase family. ArgD subfamily. As to quaternary structure, homodimer. Requires pyridoxal 5'-phosphate as cofactor.

The protein resides in the cytoplasm. The catalysed reaction is N(2)-acetyl-L-ornithine + 2-oxoglutarate = N-acetyl-L-glutamate 5-semialdehyde + L-glutamate. Its pathway is amino-acid biosynthesis; L-arginine biosynthesis; N(2)-acetyl-L-ornithine from L-glutamate: step 4/4. The polypeptide is Acetylornithine aminotransferase (Mesorhizobium japonicum (strain LMG 29417 / CECT 9101 / MAFF 303099) (Mesorhizobium loti (strain MAFF 303099))).